Reading from the N-terminus, the 486-residue chain is Lipase 1 (486 aa).

C58 and C82 are disulfide-bonded. The Acyl-ester intermediate role is filled by S193. The Charge relay system role is filled by D303. N332 is a glycosylation site (N-linked (GlcNAc...) asparagine). H392 acts as the Charge relay system in catalysis.

Belongs to the type-B carboxylesterase/lipase family.

It catalyses the reaction a triacylglycerol + H2O = a diacylglycerol + a fatty acid + H(+). In Yarrowia lipolytica (strain CLIB 122 / E 150) (Yeast), this protein is Lipase 1 (LIP1).